We begin with the raw amino-acid sequence, 474 residues long: Dol-P-Glc:Glc(2)Man(9)GlcNAc(2)-PP-Dol alpha-1,2-glucosyltransferase (474 aa).

The Cytoplasmic segment spans residues 1–6 (MAQLEG). The helical transmembrane segment at 7–27 (YYFSAALSCTFLVSCLLFSAF) threads the bilayer. At 28–64 (SRALREPYMDEIFHLPQAQRYCEGRFSLSQWDPMITT) the chain is on the extracellular side. Residues 65–85 (LPGLYLVSVGVVKPASWLLGW) traverse the membrane as a helical segment. Residues 86 to 97 (SEHVICSIGVLR) lie on the Cytoplasmic side of the membrane. Residues 98-118 (FVNLLFSVGNFYLLYLLFRKV) form a helical membrane-spanning segment. Residues 119 to 126 (QPRNKASS) are Extracellular-facing. A helical membrane pass occupies residues 127-147 (SIQRILSTLTLAVFPTLYFFN). Residues 148-150 (FLY) are Cytoplasmic-facing. Residues 151–171 (YTEAGSVFFTLFAYLMCLYGN) form a helical membrane-spanning segment. Residues 172 to 175 (HRTS) are Extracellular-facing. Residues 176-196 (ALLGFCGFMFRQTNIIWAAFC) traverse the membrane as a helical segment. At 197 to 256 (AGHLIAQKCSEAWKIELQKKKEERLAPTKGPLSELRRVLQFLLVYAMSLKNLRMLFLLTW) the chain is on the cytoplasmic side. The chain crosses the membrane as a helical span at residues 257–277 (PYVLLLLAFFAFVVVNGGIVV). At 278-283 (GDRSSH) the chain is on the extracellular side. The chain crosses the membrane as a helical span at residues 284 to 304 (EACLHFPQLFYFFSFTAFFSF). Over 305-317 (PHLLSLTKVKTFL) the chain is Cytoplasmic. A helical membrane pass occupies residues 318–338 (SLVWKRRVQFSVVTLVSILLV). Residues 339–365 (WKFTYVHKYLLADNRHYTFYVWKRVFQ) lie on the Extracellular side of the membrane. Residues 366–386 (RHEVVKYLLVPAYIFAGWAIA) traverse the membrane as a helical segment. Residues 387-392 (DSLKAK) lie on the Cytoplasmic side of the membrane. Residues 393-413 (SIFWNLMFFVCLVASTVPQKL) traverse the membrane as a helical segment. The Extracellular segment spans residues 414–436 (LEFRYFILPYIIYRLNIPLPPIS). Residues 437-457 (RLVCELGCYTVVNFVTFYIFL) form a helical membrane-spanning segment. Residues 458-473 (NKTFQWPNSQDIQRFM) lie on the Cytoplasmic side of the membrane.

The protein belongs to the ALG10 glucosyltransferase family. Interacts with KCNH1; may regulate KCNH1, possibly by regulating its N-glycosylation. Interacts with KCNH2; may reduce KCNH2 sensitivity to classic proarrhythmic drug blockade, possibly by regulating its N-glycosylation.

It localises to the endoplasmic reticulum membrane. The enzyme catalyses an alpha-D-Glc-(1-&gt;3)-alpha-D-Glc-(1-&gt;3)-alpha-D-Man-(1-&gt;2)-alpha-D-Man-(1-&gt;2)-alpha-D-Man-(1-&gt;3)-[alpha-D-Man-(1-&gt;2)-alpha-D-Man-(1-&gt;3)-[alpha-D-Man-(1-&gt;2)-alpha-D-Man-(1-&gt;6)]-alpha-D-Man-(1-&gt;6)]-beta-D-Man-(1-&gt;4)-beta-D-GlcNAc-(1-&gt;4)-alpha-D-GlcNAc-diphospho-di-trans,poly-cis-dolichol + a di-trans,poly-cis-dolichyl beta-D-glucosyl phosphate = a alpha-D-Glc-(1-&gt;2)-alpha-D-Glc-(1-&gt;3)-alpha-D-Glc-(1-&gt;3)-alpha-D-Man-(1-&gt;2)-alpha-D-Man-(1-&gt;2)-alpha-D-Man-(1-&gt;3)-[alpha-D-Man-(1-&gt;2)-alpha-D-Man-(1-&gt;3)-[alpha-D-Man-(1-&gt;2)-alpha-D-Man-(1-&gt;6)]-alpha-D-Man-(1-&gt;6)]-beta-D-Man-(1-&gt;4)-beta-D-GlcNAc-(1-&gt;4)-alpha-D-GlcNAc-diphospho-di-trans,poly-cis-dolichol + a di-trans,poly-cis-dolichyl phosphate + H(+). Its pathway is protein modification; protein glycosylation. Its function is as follows. Dol-P-Glc:Glc(2)Man(9)GlcNAc(2)-PP-Dol alpha-1,2-glucosyltransferase that operates in the biosynthetic pathway of dolichol-linked oligosaccharides, the glycan precursors employed in protein asparagine (N)-glycosylation. The assembly of dolichol-linked oligosaccharides begins on the cytosolic side of the endoplasmic reticulum membrane and finishes in its lumen. The sequential addition of sugars to dolichol pyrophosphate produces dolichol-linked oligosaccharides containing fourteen sugars, including two GlcNAcs, nine mannoses and three glucoses. Once assembled, the oligosaccharide is transferred from the lipid to nascent proteins by oligosaccharyltransferases. In the lumen of the endoplasmic reticulum, adds the third and last glucose residue from dolichyl phosphate glucose (Dol-P-Glc) onto the lipid-linked oligosaccharide intermediate Glc(2)Man(9)GlcNAc(2)-PP-Dol to produce Glc(3)Man(9)GlcNAc(2)-PP-Dol. This is Dol-P-Glc:Glc(2)Man(9)GlcNAc(2)-PP-Dol alpha-1,2-glucosyltransferase from Mus musculus (Mouse).